The primary structure comprises 460 residues: uncharacterized protein (460 aa).

This is an uncharacterized protein from Haemophilus influenzae (strain ATCC 51907 / DSM 11121 / KW20 / Rd).